We begin with the raw amino-acid sequence, 71 residues long: Protein CYSTEINE-RICH TRANSMEMBRANE MODULE 3 (71 aa).

The segment at 30–49 is disordered; sequence VMMKDSPQTVQPPHEGQSKG. Residues 48 to 64 traverse the membrane as a helical segment; sequence KGSGGFLRGCLAAMCCC.

Belongs to the CYSTM1 family. As to quaternary structure, heterodimers. Interacts with CYSTM7 and WIH1/CYSTM13. In terms of tissue distribution, mostly expressed in leaves and flowers and, to a lower extent, in stems, siliques, shoots and roots.

It localises to the cell membrane. The protein localises to the cytoplasm. It is found in the mitochondrion. Its function is as follows. Negatively regulates salt stress responses and Na(+) homeostasis. Prevents Na(+) efflux, disturbs reactive oxygen species (ROS) homeostasis, and represses the expression of nuclear salt stress-responsive genes. Involved in resistance to abiotic stress. The protein is Protein CYSTEINE-RICH TRANSMEMBRANE MODULE 3 of Arabidopsis thaliana (Mouse-ear cress).